A 150-amino-acid chain; its full sequence is Helix-loop-helix protein hlh-12 (150 aa).

Residues 1–24 are disordered; sequence MAKKPRVTKLNTDRRSRANERERQ. Over residues 11–24 the composition is skewed to basic and acidic residues; it reads NTDRRSRANERERQ. A basic motif region spans residues 13–26; the sequence is DRRSRANERERQRV. Positions 13–65 constitute a bHLH domain; sequence DRRSRANERERQRVSEMNGMFDVLLNLLPPSHFKTRLSRVQILREATSYIIRL. Residues 27–65 form a helix-loop-helix motif region; sequence SEMNGMFDVLLNLLPPSHFKTRLSRVQILREATSYIIRL.

In terms of assembly, forms a heterodimer with helix-loop-helix protein hlh-2.

It is found in the nucleus. In terms of biological role, transcription factor which binds the E box motif 5'-GCAGGTG-3'. Involved in migration of the gonadal leader cells; distal tip cells (DTCs) in hermaphrodites, and linker cells in males. Positively regulates expression of alpha integrin ina-1 and ADAMTS protease gon-1. The sequence is that of Helix-loop-helix protein hlh-12 from Caenorhabditis elegans.